The following is a 435-amino-acid chain: Indole diterpene prenyltransferase atmD (435 aa).

Residues 81–82 and Glu90 contribute to the L-tryptophan site; that span reads AY. Positions 103, 190, 261, 263, 265, 346, and 413 each coordinate substrate.

Belongs to the tryptophan dimethylallyltransferase family.

Indole diterpene prenyltransferase; part of the ATM2 gene cluster that mediates the biosynthesis of aflatrem, a tremorgenic mycotoxin with acute neurotoxic effects. Synthesis of geranylgeranyl diphosphate (GGPP) by AtmG (a GGPP synthase) precedes condensation of GGPP with indole 3-glycerol phosphate, followed by epoxidation and cyclization by AtmM (a FAD-dependent monooxygenase) and AtmC (a prenyltransferase) to produce paspaline. AtmB is also essential for paspaline production, but its exact role has not been identified yet. AtmP, a cytochrome P450 monooxygenase, subsequently converts paspaline to 13-desoxypaxilline via PC-M6 by removal of the C-30 methyl group and oxidation at C-10. AtmQ, a cytochrome P450 monooxygenase, then catalyzes the oxidation of 13-desoxypaxilline, first at C-7 to produce paspalicine and then at C-13 to form paspalinine. Finally, AtmD prenylates paspalinine to form aflatrem. The protein is Indole diterpene prenyltransferase atmD of Aspergillus flavus.